Consider the following 388-residue polypeptide: Chorismate synthase (388 aa).

The NADP(+) site is built by R39 and R45. FMN-binding positions include 130 to 132, 251 to 252, G296, 311 to 315, and R337; these read RSS, NA, and KPIPT.

This sequence belongs to the chorismate synthase family. As to quaternary structure, homotetramer. FMNH2 serves as cofactor.

It carries out the reaction 5-O-(1-carboxyvinyl)-3-phosphoshikimate = chorismate + phosphate. It participates in metabolic intermediate biosynthesis; chorismate biosynthesis; chorismate from D-erythrose 4-phosphate and phosphoenolpyruvate: step 7/7. Its function is as follows. Catalyzes the anti-1,4-elimination of the C-3 phosphate and the C-6 proR hydrogen from 5-enolpyruvylshikimate-3-phosphate (EPSP) to yield chorismate, which is the branch point compound that serves as the starting substrate for the three terminal pathways of aromatic amino acid biosynthesis. This reaction introduces a second double bond into the aromatic ring system. This Streptococcus pneumoniae serotype 2 (strain D39 / NCTC 7466) protein is Chorismate synthase.